Here is a 98-residue protein sequence, read N- to C-terminus: Large ribosomal subunit protein uL23 (98 aa).

It belongs to the universal ribosomal protein uL23 family. In terms of assembly, part of the 50S ribosomal subunit. Contacts protein L29, and trigger factor when it is bound to the ribosome.

In terms of biological role, one of the early assembly proteins it binds 23S rRNA. One of the proteins that surrounds the polypeptide exit tunnel on the outside of the ribosome. Forms the main docking site for trigger factor binding to the ribosome. This Cellvibrio japonicus (strain Ueda107) (Pseudomonas fluorescens subsp. cellulosa) protein is Large ribosomal subunit protein uL23.